We begin with the raw amino-acid sequence, 106 residues long: Iron-sulfur cluster assembly protein CyaY (106 aa).

Belongs to the frataxin family.

Functionally, involved in iron-sulfur (Fe-S) cluster assembly. May act as a regulator of Fe-S biogenesis. The chain is Iron-sulfur cluster assembly protein CyaY from Yersinia pestis bv. Antiqua (strain Antiqua).